The chain runs to 121 residues: Small ribosomal subunit protein bS16 (121 aa).

The span at 97 to 114 (LAKAKTKDGDNDSSKAES) shows a compositional bias: basic and acidic residues. Residues 97–121 (LAKAKTKDGDNDSSKAESESNEAET) are disordered.

Belongs to the bacterial ribosomal protein bS16 family.

This chain is Small ribosomal subunit protein bS16, found in Prochlorococcus marinus (strain MIT 9301).